Here is a 391-residue protein sequence, read N- to C-terminus: MANWTQEDGAPTPVTNPSEVSQVSGGSVTGGPAVTSCLIPSFAEAVKLLKARYSCLVLDTHRRHISLPPVHLKKKKTGIQEQLNAELLKYSNSLDGVPVAYDNIKVVGQHGNIYDDQGFIHFNIEASFVIFRPKNGSRLMGVINKMGASHVGCLVHGCFNASVMKPNALTSDQWRDSGLCVGQSLEFEVFQLDADAAGVLLIRGRLDRSRVQELVAQFEQKQVTAESSTEADATEDTTDSPKPKKKKKRKKDKNDTESSMEECVNNSSLQETSEHHQTTTEEDCSANGRHKEKKKKKKRDKNDTESSMDECMNNNSLQETALDTTEEDCNANERHKEKKKKKKRDKQQDSAEIVPTSDSSGYISDKTSRKRALEAGDDTETPAAKKKKKSK.

2 disordered regions span residues 1–27 and 220–391; these read MANW…SGGS and QKQV…KKSK. Over residues 288 to 299 the composition is skewed to basic residues; it reads GRHKEKKKKKKR. The stretch at 289–353 forms a coiled coil; sequence RHKEKKKKKK…RDKQQDSAEI (65 aa). Positions 312–323 are enriched in polar residues; sequence MNNNSLQETALD. Basic residues predominate over residues 336 to 345; it reads KEKKKKKKRD.

It belongs to the eukaryotic RPA43 RNA polymerase subunit family. In terms of assembly, component of the RNA polymerase I (Pol I) complex consisting of at least 13 subunits.

It is found in the nucleus. The protein localises to the nucleolus. Its function is as follows. DNA-dependent RNA polymerase catalyzes the transcription of DNA into RNA using the four ribonucleoside triphosphates as substrates. Component of RNA polymerase I which synthesizes ribosomal RNA precursors. May be involved in recruitment of Pol I to rDNA promoters. This is DNA-directed RNA polymerase I subunit RPA43 from Danio rerio (Zebrafish).